The chain runs to 515 residues: Methionine--tRNA ligase (515 aa).

A 'HIGH' region motif is present at residues 13–23 (AYPNGKPHIGH). Positions 300-304 (KMSKS) match the 'KMSKS' region motif. An ATP-binding site is contributed by Lys-303.

Belongs to the class-I aminoacyl-tRNA synthetase family. MetG type 2B subfamily. In terms of assembly, monomer.

The protein localises to the cytoplasm. The enzyme catalyses tRNA(Met) + L-methionine + ATP = L-methionyl-tRNA(Met) + AMP + diphosphate. Is required not only for elongation of protein synthesis but also for the initiation of all mRNA translation through initiator tRNA(fMet) aminoacylation. This chain is Methionine--tRNA ligase, found in Brucella melitensis biotype 1 (strain ATCC 23456 / CCUG 17765 / NCTC 10094 / 16M).